We begin with the raw amino-acid sequence, 204 residues long: Quinol oxidase subunit 3 (204 aa).

A run of 5 helical transmembrane segments spans residues 27 to 47, 66 to 86, 95 to 115, 140 to 160, and 184 to 204; these read FWIF…TFFV, LVMI…IAVH, GVVI…GCEI, LLGT…GILI, and FLDV…LGGL.

Belongs to the cytochrome c oxidase subunit 3 family.

Its subcellular location is the cell membrane. The catalysed reaction is 2 a quinol + O2 = 2 a quinone + 2 H2O. Its function is as follows. Catalyzes quinol oxidation with the concomitant reduction of oxygen to water. Major component for energy conversion during vegetative growth. The sequence is that of Quinol oxidase subunit 3 (qoxC) from Bacillus spizizenii (strain ATCC 23059 / NRRL B-14472 / W23) (Bacillus subtilis subsp. spizizenii).